Reading from the N-terminus, the 545-residue chain is Membrane protein insertase YidC (545 aa).

The chain crosses the membrane as a helical span at residues 6 to 26; the sequence is LILFSALVLVLFLMWDAWQTD. The segment at 34–59 is disordered; sequence PPPPQPTASSGESSPVLPEAVPDAPP. Helical transmembrane passes span 357–377, 428–448, and 505–525; these read LVGN…LVFF, GGCL…WMLL, and PVMF…YWVV.

It belongs to the OXA1/ALB3/YidC family. Type 1 subfamily. Interacts with the Sec translocase complex via SecD. Specifically interacts with transmembrane segments of nascent integral membrane proteins during membrane integration.

The protein localises to the cell inner membrane. Required for the insertion and/or proper folding and/or complex formation of integral membrane proteins into the membrane. Involved in integration of membrane proteins that insert both dependently and independently of the Sec translocase complex, as well as at least some lipoproteins. Aids folding of multispanning membrane proteins. In Nitrosococcus oceani (strain ATCC 19707 / BCRC 17464 / JCM 30415 / NCIMB 11848 / C-107), this protein is Membrane protein insertase YidC.